A 489-amino-acid chain; its full sequence is RNA polymerase II subunit 5-mediating protein homolog (489 aa).

Disordered stretches follow at residues 141-188, 200-329, 396-415, and 434-489; these read NSDE…MDEE, EEKE…EEDE, ILKT…SYNE, and FENQ…RQNK. Positions 157–168 are enriched in low complexity; the sequence is QKSTTTTTTTTT. 2 stretches are compositionally biased toward basic and acidic residues: residues 169–188 and 215–224; these read SKDK…MDEE and FNKKFNKKLD. 3 stretches are compositionally biased toward acidic residues: residues 227-265, 276-298, and 315-329; these read GSDE…EDEK, EEDD…EYYD, and QGDD…EEDE. A compositionally biased stretch (polar residues) spans 396–413; the sequence is ILKTNSSGNLMSTIPKSY. Residues 480–489 show a composition bias toward basic residues; sequence SRFKSSRQNK.

The protein belongs to the RNA polymerase II subunit 5-mediating protein family.

It localises to the nucleus. This is RNA polymerase II subunit 5-mediating protein homolog (rmp) from Dictyostelium discoideum (Social amoeba).